The primary structure comprises 307 residues: Elongation factor Ts (307 aa).

Residues 82-85 (TDFV) are involved in Mg(2+) ion dislocation from EF-Tu.

It belongs to the EF-Ts family.

Its subcellular location is the cytoplasm. Functionally, associates with the EF-Tu.GDP complex and induces the exchange of GDP to GTP. It remains bound to the aminoacyl-tRNA.EF-Tu.GTP complex up to the GTP hydrolysis stage on the ribosome. The protein is Elongation factor Ts of Nautilia profundicola (strain ATCC BAA-1463 / DSM 18972 / AmH).